Consider the following 468-residue polypeptide: Glutamate--tRNA ligase (468 aa).

Residues 8-18 (PSPTGFLHVGG) carry the 'HIGH' region motif. Zn(2+) is bound by residues Cys97, Cys99, Cys124, and Asp126. Residues 236–240 (KLSKR) carry the 'KMSKS' region motif. Lys239 is a binding site for ATP.

The protein belongs to the class-I aminoacyl-tRNA synthetase family. Glutamate--tRNA ligase type 1 subfamily. Monomer. Zn(2+) is required as a cofactor.

The protein resides in the cytoplasm. It carries out the reaction tRNA(Glu) + L-glutamate + ATP = L-glutamyl-tRNA(Glu) + AMP + diphosphate. Catalyzes the attachment of glutamate to tRNA(Glu) in a two-step reaction: glutamate is first activated by ATP to form Glu-AMP and then transferred to the acceptor end of tRNA(Glu). The chain is Glutamate--tRNA ligase from Francisella tularensis subsp. holarctica (strain FTNF002-00 / FTA).